The following is a 194-amino-acid chain: Peptidyl-tRNA hydrolase (194 aa).

Y17 provides a ligand contact to tRNA. H22 (proton acceptor) is an active-site residue. Residues Y69, N71, and N117 each coordinate tRNA.

This sequence belongs to the PTH family. As to quaternary structure, monomer.

The protein resides in the cytoplasm. It catalyses the reaction an N-acyl-L-alpha-aminoacyl-tRNA + H2O = an N-acyl-L-amino acid + a tRNA + H(+). Hydrolyzes ribosome-free peptidyl-tRNAs (with 1 or more amino acids incorporated), which drop off the ribosome during protein synthesis, or as a result of ribosome stalling. Its function is as follows. Catalyzes the release of premature peptidyl moieties from peptidyl-tRNA molecules trapped in stalled 50S ribosomal subunits, and thus maintains levels of free tRNAs and 50S ribosomes. This is Peptidyl-tRNA hydrolase from Arthrobacter sp. (strain FB24).